A 341-amino-acid chain; its full sequence is Ectoine-binding periplasmic protein TeaA (341 aa).

The first 25 residues, 1-25, serve as a signal peptide directing secretion; sequence MKAYKLLTTASIGALMLGMSTAAYS. L-ectoine-binding residues include glutamate 34, arginine 169, asparagine 209, tryptophan 213, and phenylalanine 234.

This sequence belongs to the bacterial solute-binding protein 7 family. As to quaternary structure, monomer. The complex comprises the extracytoplasmic solute receptor protein TeaA, and the two transmembrane proteins TeaB and TeaC.

It localises to the periplasm. Part of the tripartite ATP-independent periplasmic (TRAP) transport system TeaABC involved in the uptake of ectoine and hydroxyectoine in response to osmotic upshock. Probably functions as a recovery system for synthesized ectoine that leaks out of the cell. Binds ectoine with high affinity. Affinity for hydroxyectoine is approximately 20-fold lower. In Halomonas elongata (strain ATCC 33173 / DSM 2581 / NBRC 15536 / NCIMB 2198 / 1H9), this protein is Ectoine-binding periplasmic protein TeaA (teaA).